The primary structure comprises 299 residues: uncharacterized protein (299 aa).

The helical transmembrane segment at 25–45 (LLYFFKSLAMILFFIFFSLTS) threads the bilayer.

The protein resides in the membrane. This is an uncharacterized protein from Rickettsia prowazekii (strain Madrid E).